Consider the following 472-residue polypeptide: Endoplasmic reticulum oxidoreductin-2 (472 aa).

The signal sequence occupies residues M1–A37. N-linked (GlcNAc...) asparagine glycosylation occurs at N44. 6 disulfides stabilise this stretch: C55–C74, C57–C72, C111–C371, C120–C125, C221–C230, and C374–C377. Positions 200, 202, and 213 each coordinate FAD. Residues S241 and H244 each coordinate FAD. The N-linked (GlcNAc...) asparagine glycan is linked to N267. Residues R274 and R281 each contribute to the FAD site. The N-linked (GlcNAc...) asparagine glycan is linked to N364.

This sequence belongs to the EROs family. As to quaternary structure, may function both as a monomer and a homodimer. FAD is required as a cofactor. In terms of processing, N-glycosylated.

The protein resides in the endoplasmic reticulum membrane. In terms of biological role, essential oxidoreductase that oxidizes proteins in the endoplasmic reticulum to produce disulfide bonds. Acts by oxidizing directly PDI isomerase through a direct disulfide exchange. Does not act as a direct oxidant of folding substrate, but relies on PDI to transfer oxidizing equivalent. Does not oxidize all PDI related proteins, suggesting that it can discriminate between PDI and related proteins. Its reoxidation probably involves electron transfer to molecular oxygen via FAD. Acts independently of glutathione. May be responsible for a significant proportion of reactive oxygen species (ROS) in the cell, thereby being a source of oxidative stress. The protein is Endoplasmic reticulum oxidoreductin-2 (AERO2) of Arabidopsis thaliana (Mouse-ear cress).